The primary structure comprises 300 residues: F-box associated domain-containing protein sdz-33 (300 aa).

The region spanning 5-51 is the F-box domain; the sequence is PFPILCLPDFVLQKSLKLMGVVEHLCLSILSKNIKQLIATLKGYPKC.

In terms of tissue distribution, expressed in D-type motor neuron cell bodies.

In terms of biological role, substrate recognition component of E3 ubiquitin-protein ligase complex which mediates the ubiquitination and subsequent proteasomal degradation of target proteins such as mdl-1. Positively regulates axon regeneration by targeting mdl-1 for ubiquitin-mediated degradation; probably thereby reducing levels of mdl-1-mxl-1 heterodimers, allowing free mxl-1 to form complexes with tdpt-1 and thus inhibiting tdpt-1-dependent sumoylation of ets-4. This is F-box associated domain-containing protein sdz-33 from Caenorhabditis elegans.